The following is a 189-amino-acid chain: Elongation factor P (189 aa).

Lys-34 carries the N6-(3,6-diaminohexanoyl)-5-hydroxylysine modification.

This sequence belongs to the elongation factor P family. May be beta-lysylated on the epsilon-amino group of Lys-34 by the combined action of EpmA and EpmB, and then hydroxylated on the C5 position of the same residue by EpmC (if this protein is present). Lysylation is critical for the stimulatory effect of EF-P on peptide-bond formation. The lysylation moiety may extend toward the peptidyltransferase center and stabilize the terminal 3-CCA end of the tRNA. Hydroxylation of the C5 position on Lys-34 may allow additional potential stabilizing hydrogen-bond interactions with the P-tRNA.

The protein resides in the cytoplasm. The protein operates within protein biosynthesis; polypeptide chain elongation. In terms of biological role, involved in peptide bond synthesis. Alleviates ribosome stalling that occurs when 3 or more consecutive Pro residues or the sequence PPG is present in a protein, possibly by augmenting the peptidyl transferase activity of the ribosome. Modification of Lys-34 is required for alleviation. In Legionella pneumophila (strain Paris), this protein is Elongation factor P.